Here is a 90-residue protein sequence, read N- to C-terminus: MVKKSFIPVISQEKKEENPGSVEFQVFNFTNKIRRLTSHFELHRKDYLSQRGLRKILGKRQRLLSYLSKKNKIRYKKLINLLDIRESKIR.

The protein belongs to the universal ribosomal protein uS15 family. As to quaternary structure, part of the 30S ribosomal subunit.

The protein localises to the plastid. It localises to the chloroplast. The chain is Small ribosomal subunit protein uS15c (rps15) from Lotus japonicus (Lotus corniculatus var. japonicus).